The chain runs to 594 residues: UvrABC system protein C (594 aa).

The GIY-YIG domain occupies 15-92 (DKPGCYQMKN…IQKFQPYYNI (78 aa)). The region spanning 197–232 (AKIKQSLQTKMQKASEAMEFERAADIRDQIHYIEVT) is the UVR domain.

Belongs to the UvrC family. In terms of assembly, interacts with UvrB in an incision complex.

The protein resides in the cytoplasm. Its function is as follows. The UvrABC repair system catalyzes the recognition and processing of DNA lesions. UvrC both incises the 5' and 3' sides of the lesion. The N-terminal half is responsible for the 3' incision and the C-terminal half is responsible for the 5' incision. The chain is UvrABC system protein C from Pediococcus pentosaceus (strain ATCC 25745 / CCUG 21536 / LMG 10740 / 183-1w).